Here is a 241-residue protein sequence, read N- to C-terminus: Small ribosomal subunit protein uS2 (241 aa).

This sequence belongs to the universal ribosomal protein uS2 family.

The sequence is that of Small ribosomal subunit protein uS2 from Klebsiella pneumoniae (strain 342).